Reading from the N-terminus, the 228-residue chain is Ribose-5-phosphate isomerase A (228 aa).

Substrate contacts are provided by residues 29 to 32 (TGST), 85 to 88 (DGAD), and 98 to 101 (KGGG). Glu107 serves as the catalytic Proton acceptor. Lys125 is a substrate binding site.

The protein belongs to the ribose 5-phosphate isomerase family. As to quaternary structure, homodimer.

It catalyses the reaction aldehydo-D-ribose 5-phosphate = D-ribulose 5-phosphate. The protein operates within carbohydrate degradation; pentose phosphate pathway; D-ribose 5-phosphate from D-ribulose 5-phosphate (non-oxidative stage): step 1/1. Its function is as follows. Catalyzes the reversible conversion of ribose-5-phosphate to ribulose 5-phosphate. The polypeptide is Ribose-5-phosphate isomerase A (Staphylococcus aureus (strain Mu50 / ATCC 700699)).